Reading from the N-terminus, the 33-residue chain is Putative makorin-5 (33 aa).

This Homo sapiens (Human) protein is Putative makorin-5 (MKRN9P).